The following is a 301-amino-acid chain: Quinolinate synthase (301 aa).

Iminosuccinate is bound by residues histidine 21 and serine 38. [4Fe-4S] cluster is bound at residue cysteine 83. Residues 109–111 and serine 126 contribute to the iminosuccinate site; that span reads YIN. Cysteine 169 is a [4Fe-4S] cluster binding site. Residues 195–197 and threonine 212 contribute to the iminosuccinate site; that span reads HPE. Cysteine 257 contributes to the [4Fe-4S] cluster binding site.

This sequence belongs to the quinolinate synthase family. Type 2 subfamily. Requires [4Fe-4S] cluster as cofactor.

Its subcellular location is the cytoplasm. The enzyme catalyses iminosuccinate + dihydroxyacetone phosphate = quinolinate + phosphate + 2 H2O + H(+). It functions in the pathway cofactor biosynthesis; NAD(+) biosynthesis; quinolinate from iminoaspartate: step 1/1. Its function is as follows. Catalyzes the condensation of iminoaspartate with dihydroxyacetone phosphate to form quinolinate. In Clostridium perfringens (strain ATCC 13124 / DSM 756 / JCM 1290 / NCIMB 6125 / NCTC 8237 / Type A), this protein is Quinolinate synthase.